The primary structure comprises 309 residues: tRNA pseudouridine synthase B (309 aa).

The active-site Nucleophile is aspartate 40.

Belongs to the pseudouridine synthase TruB family. Type 1 subfamily.

The catalysed reaction is uridine(55) in tRNA = pseudouridine(55) in tRNA. Its function is as follows. Responsible for synthesis of pseudouridine from uracil-55 in the psi GC loop of transfer RNAs. The protein is tRNA pseudouridine synthase B of Mycobacterium avium (strain 104).